Reading from the N-terminus, the 1368-residue chain is DNA-directed RNA polymerase subunit beta (1368 aa).

The protein belongs to the RNA polymerase beta chain family. The RNAP catalytic core consists of 2 alpha, 1 beta, 1 beta' and 1 omega subunit. When a sigma factor is associated with the core the holoenzyme is formed, which can initiate transcription.

It catalyses the reaction RNA(n) + a ribonucleoside 5'-triphosphate = RNA(n+1) + diphosphate. DNA-dependent RNA polymerase catalyzes the transcription of DNA into RNA using the four ribonucleoside triphosphates as substrates. The protein is DNA-directed RNA polymerase subunit beta of Burkholderia mallei (strain SAVP1).